Here is a 192-residue protein sequence, read N- to C-terminus: Inner membrane protein YohD (192 aa).

Over 1–40 the chain is Periplasmic; the sequence is MDLNTLISQYGYAALVIGSLAEGETVTLLGGVAAHQGLLK. The helical transmembrane segment at 41–61 threads the bilayer; the sequence is FPLVVLSVALGGMIGDQVLYL. Over 62–121 the chain is Cytoplasmic; that stretch reads CGRRFGGKLLRRFSKHQDKIERAQKLIQRHPYLFVIGTRFMYGFRVIGPTLIGASQLPPK. Residues 122 to 142 form a helical membrane-spanning segment; the sequence is IFLPLNILGAFAWALIFTTIG. The Periplasmic portion of the chain corresponds to 143–159; the sequence is YAGGQVIAPWLHNLDQH. A helical transmembrane segment spans residues 160-180; the sequence is LKHWVWLILVVVLVVGVRWWL. Topologically, residues 181–192 are cytoplasmic; sequence KRRGKKKPDHQA.

It belongs to the DedA family.

Its subcellular location is the cell inner membrane. The polypeptide is Inner membrane protein YohD (yohD) (Escherichia coli (strain K12)).